A 399-amino-acid polypeptide reads, in one-letter code: Chorismate synthase (399 aa).

NADP(+) is bound by residues arginine 40 and arginine 46. Residues 134-136, 255-256, glycine 299, 314-318, and arginine 340 contribute to the FMN site; these read RAS, QA, and KPIST.

It belongs to the chorismate synthase family. As to quaternary structure, homotetramer. Requires FMNH2 as cofactor.

The enzyme catalyses 5-O-(1-carboxyvinyl)-3-phosphoshikimate = chorismate + phosphate. The protein operates within metabolic intermediate biosynthesis; chorismate biosynthesis; chorismate from D-erythrose 4-phosphate and phosphoenolpyruvate: step 7/7. Catalyzes the anti-1,4-elimination of the C-3 phosphate and the C-6 proR hydrogen from 5-enolpyruvylshikimate-3-phosphate (EPSP) to yield chorismate, which is the branch point compound that serves as the starting substrate for the three terminal pathways of aromatic amino acid biosynthesis. This reaction introduces a second double bond into the aromatic ring system. This is Chorismate synthase from Mycolicibacterium smegmatis (strain ATCC 700084 / mc(2)155) (Mycobacterium smegmatis).